We begin with the raw amino-acid sequence, 5381 residues long: Protein purity of essence (5381 aa).

Disordered regions lie at residues 140–174, 339–364, 599–621, 683–709, 1162–1212, and 1632–1659; these read KHPE…PKLE, QQQT…TSKD, SPET…QKSA, RNDS…SSGS, SGGD…STET, and QAAQ…QSER. Residues 339–350 are compositionally biased toward low complexity; sequence QQQTAAAASTSQ. 2 stretches are compositionally biased toward low complexity: residues 690 to 709 and 1167 to 1176; these read SPPS…SSGS and SSCTSAASSS. Residues 1632–1646 show a composition bias toward polar residues; it reads QAAQPNPSEESSQAC. Over residues 1647 to 1658 the composition is skewed to basic and acidic residues; sequence DHSEGGEQRQSE. The UBR-type zinc-finger motif lies at 1815 to 1884; the sequence is KLCTFSQTQK…EDGSCQALSR (70 aa). Disordered regions lie at residues 1917-1939, 2443-2479, 2632-2652, 3037-3143, 3537-3562, and 4247-4280; these read KRSN…KDSI, KNTT…KQLT, PDDS…TATQ, VSAG…DNNE, KQQQ…DREK, and HHQQ…KEAA. Polar residues-rich tracts occupy residues 1920–1930, 2470–2479, 2643–2652, and 3048–3058; these read NTAPGATQQQH, SSQQHQKQLT, SGPTPVTATQ, and NVATDGSTLRT. The span at 3065–3075 shows a compositional bias: gly residues; sequence GSGGSESGGSG. Positions 3084-3104 are enriched in polar residues; the sequence is ARSSNFGDHPNTTPPRQSCSS. Gly residues predominate over residues 3119–3132; that stretch reads SGSGGSASVPGGGL. The interval 4904 to 5374 is UBR4 E3 catalytic module; it reads PSLKYILRFL…SFIEDLLASL (471 aa). The HemiRING-type zinc-finger motif lies at 5022–5136; the sequence is GLTCFICREG…SSYMQESTQR (115 aa). Cys-5025, Cys-5028, His-5074, and Cys-5077 together coordinate Zn(2+). Residues 5139–5374 form the UZI domain; sequence ISYTSSIHDL…SFIEDLLASL (236 aa).

It belongs to the UBR4 family.

In terms of biological role, has a role in growth of the perineurial glial layer of the larval peripheral nerve. May have a role in male fertility and eye development or function. May bind calmodulin. This is Protein purity of essence from Drosophila pseudoobscura pseudoobscura (Fruit fly).